The primary structure comprises 345 residues: Dimethyladenosine transferase 1, mitochondrial (345 aa).

Residues 1-27 (MAASGKLGTFRLPPLPTIREIIKLFGL) constitute a mitochondrion transit peptide. S-adenosyl-L-methionine is bound by residues leucine 38, glycine 63, glutamate 85, lysine 86, aspartate 111, valine 112, and asparagine 141.

It belongs to the class I-like SAM-binding methyltransferase superfamily. rRNA adenine N(6)-methyltransferase family. KsgA subfamily. In terms of assembly, interacts with mitochondrial RNA polymerase POLRMT. Interacts with TFAM. Remains bound to the maturing mtSSU until the late stages of assembly. As to expression, ubiquitously expressed.

It localises to the mitochondrion. It catalyses the reaction adenosine(N)/adenosine(N+1) in rRNA + 4 S-adenosyl-L-methionine = N(6)-dimethyladenosine(N)/N(6)-dimethyladenosine(N+1) in rRNA + 4 S-adenosyl-L-homocysteine + 4 H(+). In terms of biological role, mitochondrial methyltransferase which uses S-adenosyl methionine to dimethylate two highly conserved adjacent adenosine residues (A1006 and A1007) within the loop of helix 45 at the 3-prime end of 12S rRNA, thereby regulating the assembly or stability of the small subunit of the mitochondrial ribosome. Also required for basal transcription of mitochondrial DNA, probably via its interaction with POLRMT and TFAM. Stimulates transcription independently of the methyltransferase activity. This is Dimethyladenosine transferase 1, mitochondrial (Tfb1m) from Mus musculus (Mouse).